The following is a 269-amino-acid chain: Protein OPG079 (269 aa).

This sequence belongs to the orthopoxvirus OPG079 family. In terms of assembly, homoomultimer (Potential). Interacts with the small subunit of ribonucleotide reductase.

It is found in the host cytoplasm. Its function is as follows. Plays an essential role in viral DNA replication. Binds to ssDNA with high affinity and localizes to cytoplasmic factories where nascent viral genomes accumulate. May disrupt loops, hairpins and other secondary structures present on ssDNA to reduce and eliminate pausing of viral DNA polymerase at specific sites during elongation. This chain is Protein OPG079 (OPG079), found in Cynomys gunnisoni (Gunnison's prairie dog).